We begin with the raw amino-acid sequence, 1405 residues long: DNA-directed RNA polymerase subunit beta' (1405 aa).

The Zn(2+) site is built by Cys-71, Cys-73, Cys-86, and Cys-89. Mg(2+) is bound by residues Asp-462, Asp-464, and Asp-466. Residues Cys-820, Cys-893, Cys-900, and Cys-903 each contribute to the Zn(2+) site.

The protein belongs to the RNA polymerase beta' chain family. The RNAP catalytic core consists of 2 alpha, 1 beta, 1 beta' and 1 omega subunit. When a sigma factor is associated with the core the holoenzyme is formed, which can initiate transcription. It depends on Mg(2+) as a cofactor. Requires Zn(2+) as cofactor.

It catalyses the reaction RNA(n) + a ribonucleoside 5'-triphosphate = RNA(n+1) + diphosphate. Functionally, DNA-dependent RNA polymerase catalyzes the transcription of DNA into RNA using the four ribonucleoside triphosphates as substrates. This chain is DNA-directed RNA polymerase subunit beta', found in Methylorubrum extorquens (strain CM4 / NCIMB 13688) (Methylobacterium extorquens).